Here is a 525-residue protein sequence, read N- to C-terminus: Asparagine synthetase domain-containing protein YML096W (525 aa).

C2 acts as the For GATase activity in catalysis. A Glutamine amidotransferase type-2 domain is found at 2–209; sequence CGILLHYCPN…LNSNQRSHLP (208 aa). The region spanning 210-523 is the Asparagine synthetase domain; sequence YEVTSEIDLN…GTDLLKENRN (314 aa). Positions 503–525 are disordered; it reads SAKMTKDGNKHGTDLLKENRNCS. Residues 506 to 525 are compositionally biased toward basic and acidic residues; it reads MTKDGNKHGTDLLKENRNCS.

It is found in the cytoplasm. In Saccharomyces cerevisiae (strain ATCC 204508 / S288c) (Baker's yeast), this protein is Asparagine synthetase domain-containing protein YML096W.